Consider the following 685-residue polypeptide: Transforming growth factor beta activator LRRC33 (685 aa).

Residues Met-1–Gly-27 form the signal peptide. At His-28 to Ser-640 the chain is on the extracellular side. In terms of domain architecture, LRRNT spans Pro-29–Pro-56. LRR repeat units lie at residues His-57–Tyr-79, Pro-80–Glu-102, Ser-103–Ser-129, Leu-130–Asn-154, Leu-155–Asp-178, His-180–His-201, and Met-202–Gln-225. Asn-154 carries an N-linked (GlcNAc...) asparagine glycan. N-linked (GlcNAc...) asparagine glycans are attached at residues Asn-230 and Asn-244. LRR repeat units follow at residues Thr-248–Asn-271 and Ile-273–Asn-296. Asn-291, Asn-296, Asn-309, Asn-312, and Asn-325 each carry an N-linked (GlcNAc...) asparagine glycan. 11 LRR repeats span residues Leu-326–Gln-349, Pro-351–Leu-373, Pro-374–Lys-397, Leu-400–Ser-423, Pro-425–Gly-447, Met-457–Gly-480, Ser-482–Gly-503, Ala-505–Tyr-526, Thr-527–Leu-549, Leu-551–Leu-571, and Ala-573–Thr-596. Residues Asn-402 and Asn-407 are each glycosylated (N-linked (GlcNAc...) asparagine). A glycan (N-linked (GlcNAc...) asparagine) is linked at Asn-533. The region spanning Phe-597–Asn-635 is the LRRCT domain. Residues Val-641 to Ile-661 traverse the membrane as a helical segment. At Tyr-662 to Tyr-685 the chain is on the cytoplasmic side.

It belongs to the LRRC32/LRRC33 family.

The protein localises to the cell membrane. It localises to the endoplasmic reticulum membrane. Key regulator of transforming growth factor beta-1 (TGFB1) specifically required for microglia function in the nervous system. Required for activation of latent TGF-beta-1 in macrophages and microglia: associates specifically via disulfide bonds with the Latency-associated peptide (LAP), which is the regulatory chain of TGFB1, and regulates integrin-dependent activation of TGF-beta-1. TGF-beta-1 activation mediated by lrrc33/nrros is highly localized: there is little spreading of TGF-beta-1 activated from one microglial cell to neighboring microglia, suggesting the existence of localized and selective activation of TGF-beta-1 by lrrc33/nrros. The polypeptide is Transforming growth factor beta activator LRRC33 (Danio rerio (Zebrafish)).